The following is a 497-amino-acid chain: tRNA (adenine(58)-N(1))-methyltransferase non-catalytic subunit TRM6 (497 aa).

Positions 69–102 (TNGGSLQPKKKKEEPTSETKEAGTDNRNIIDDGK) are disordered. Over residues 79-102 (KKEEPTSETKEAGTDNRNIIDDGK) the composition is skewed to basic and acidic residues. The tract at residues 94–104 (NRNIIDDGKSQ) is substrate. At Thr107 the chain carries Phosphothreonine. Substrate stretches follow at residues 145 to 154 (KYIKKKKKKY) and 175 to 182 (REPGKINH). The tract at residues 276 to 354 (SSEPKDIASV…EKQRRQEEQK (79 aa)) is disordered. Ser298 and Ser305 each carry phosphoserine. The segment covering 311 to 354 (ESNHPEEQERMEIVSQDPDYKEPKESGSKKDYIQEKQRRQEEQK) has biased composition (basic and acidic residues). The substrate site is built by Arg349 and Arg377. 2 substrate regions span residues 415–423 (RERGGVINL) and 434–441 (QVLPDRSH). The segment at 468-497 (PSLKSSTSTLESHKTEEPAAKKRKCPESDS) is disordered. Over residues 478–497 (ESHKTEEPAAKKRKCPESDS) the composition is skewed to basic and acidic residues.

Belongs to the TRM6/GCD10 family. In terms of assembly, heterotetramer; composed of two copies of TRMT6 and two copies of TRMT61A.

The protein resides in the nucleus. Its function is as follows. Substrate-binding subunit of tRNA (adenine-N(1)-)-methyltransferase, which catalyzes the formation of N(1)-methyladenine at position 58 (m1A58) in initiator methionyl-tRNA. Together with the TRMT61A catalytic subunit, part of a mRNA N(1)-methyltransferase complex that mediates methylation of adenosine residues at the N(1) position of a small subset of mRNAs: N(1) methylation takes place in tRNA T-loop-like structures of mRNAs and is only present at low stoichiometries. The sequence is that of tRNA (adenine(58)-N(1))-methyltransferase non-catalytic subunit TRM6 (TRMT6) from Bos taurus (Bovine).